Consider the following 251-residue polypeptide: 5'-nucleotidase SurE (251 aa).

A divalent metal cation is bound by residues Asp8, Asp9, Ser39, and Asn95.

This sequence belongs to the SurE nucleotidase family. It depends on a divalent metal cation as a cofactor.

Its subcellular location is the cytoplasm. The catalysed reaction is a ribonucleoside 5'-phosphate + H2O = a ribonucleoside + phosphate. Nucleotidase that shows phosphatase activity on nucleoside 5'-monophosphates. In Clostridium botulinum (strain Eklund 17B / Type B), this protein is 5'-nucleotidase SurE.